A 20-amino-acid polypeptide reads, in one-letter code: Alkaline phosphatase (20 aa).

The tract at residues 1-20 (TDMLAVSVSSTDAIGHKYGT) is disordered.

In terms of assembly, homodimer; may be disulfide-linked. Post-translationally, the N-terminus is blocked.

The catalysed reaction is a phosphate monoester + H2O = an alcohol + phosphate. Its activity is regulated as follows. Completely inhibited by thiol-reducing agents, such as DTT and 2-mercaptoethanol. Activity was also inhibited by sodium orthovanadate, sodium molybdate, N-ethylmaleimide, EDTA and zinc ion, but was not inhibited by okadaic acid. Acts against tyrosine-phosphatases. This is Alkaline phosphatase from Prevotella intermedia.